The sequence spans 35 residues: Cytochrome c-550 (35 aa).

Heme c is bound by residues cysteine 17, cysteine 20, and histidine 21.

In terms of processing, binds 1 heme c group covalently per subunit.

Its function is as follows. Monoheme cytochrome which functions as an electron carrier in the reduction of nitrite by membrane vesicles. This Virgibacillus halodenitrificans (Bacillus halodenitrificans) protein is Cytochrome c-550.